Consider the following 452-residue polypeptide: AP-4 complex subunit mu-1 (452 aa).

One can recognise an MHD domain in the interval 184–451 (KNEVFLDVVE…LSHSDAYVIR (268 aa)).

This sequence belongs to the adaptor complexes medium subunit family. In terms of assembly, adaptor protein complex 4 (AP-4) is a heterotetramer composed of two large adaptins (epsilon-type subunit AP4E1 and beta-type subunit AP4B1), a medium adaptin (mu-type subunit AP4M1) and a small adaptin (sigma-type AP4S1). Interacts with tyrosine-based sorting signals on the cytoplasmic tail of cargo proteins such as APP, ATG9A, LAMP2 and NAGPA. Interacts with the C-terminal domain of GRID2. Interacts with GRIA1 and GRIA2; the interaction is indirect via CACNG3. Interacts with CACNG3; CACNG3 associates GRIA1 and GRIA2 with the adaptor protein complex 4 (AP-4) to target them to the somatodendritic compartment of neurons. Interacts with HOOK1 and HOOK2; the interactions are direct, mediate the interaction between FTS-Hook-FHIP (FHF) complex and AP-4 and the perinuclear distribution of AP-4.

The protein localises to the golgi apparatus. It is found in the trans-Golgi network membrane. It localises to the early endosome. Functionally, component of the adaptor protein complex 4 (AP-4). Adaptor protein complexes are vesicle coat components involved both in vesicle formation and cargo selection. They control the vesicular transport of proteins in different trafficking pathways. AP-4 forms a non clathrin-associated coat on vesicles departing the trans-Golgi network (TGN) and may be involved in the targeting of proteins from the trans-Golgi network (TGN) to the endosomal-lysosomal system. It is also involved in protein sorting to the basolateral membrane in epithelial cells and the proper asymmetric localization of somatodendritic proteins in neurons. Within AP-4, the mu-type subunit AP4M1 is directly involved in the recognition and binding of tyrosine-based sorting signals found in the cytoplasmic part of cargos. The adaptor protein complex 4 (AP-4) may also recognize other types of sorting signal. This is AP-4 complex subunit mu-1 from Canis lupus familiaris (Dog).